The primary structure comprises 232 residues: tRNA1(Val) (adenine(37)-N6)-methyltransferase (232 aa).

The protein belongs to the methyltransferase superfamily. tRNA (adenine-N(6)-)-methyltransferase family.

The protein localises to the cytoplasm. The enzyme catalyses adenosine(37) in tRNA1(Val) + S-adenosyl-L-methionine = N(6)-methyladenosine(37) in tRNA1(Val) + S-adenosyl-L-homocysteine + H(+). Its function is as follows. Specifically methylates the adenine in position 37 of tRNA(1)(Val) (anticodon cmo5UAC). The sequence is that of tRNA1(Val) (adenine(37)-N6)-methyltransferase from Haemophilus influenzae (strain PittEE).